The sequence spans 34 residues: Photosystem I reaction center subunit XII (34 aa).

A helical transmembrane segment spans residues 10–32 (IFIALVVAAHAGVLAVRLCVSLY).

The protein belongs to the PsaM family.

It is found in the cellular thylakoid membrane. The protein is Photosystem I reaction center subunit XII of Synechococcus sp. (strain WH7803).